The sequence spans 428 residues: C4-dicarboxylate transport protein (428 aa).

Transmembrane regions (helical) follow at residues 8 to 28 (VLYVQVIFAIVVGVILGHYYP), 44 to 64 (LIKMVIGPIIFCTVVTGIAGM), 78 to 98 (LLYFEIVSTCALVLGLAATHI), 148 to 168 (GEILQILLIALLFGSVLAHLG), 184 to 204 (VLFGIVHIVTKLAPIGAFGAM), 222 to 242 (LIGTFYLTSVVFVLVVLGAIA), 307 to 327 (IYMTMAVLFIAQATNIELTWM), and 355 to 375 (AATLAVVPTIPLSGMVLILGI).

Belongs to the dicarboxylate/amino acid:cation symporter (DAACS) (TC 2.A.23) family.

It is found in the cell inner membrane. In terms of biological role, responsible for the transport of dicarboxylates such as succinate, fumarate, and malate from the periplasm across the membrane. This Burkholderia pseudomallei (strain 1106a) protein is C4-dicarboxylate transport protein.